Reading from the N-terminus, the 88-residue chain is Putative transmembrane protein ORF24 (88 aa).

Transmembrane regions (helical) follow at residues 16-36, 42-62, and 64-84; these read LNMG…WAGM, AVFV…VTQF, and FIWF…VASI.

The protein resides in the host membrane. The chain is Putative transmembrane protein ORF24 from Haloarcula hispanica (His1V).